A 513-amino-acid chain; its full sequence is GMP synthase [glutamine-hydrolyzing] (513 aa).

In terms of domain architecture, Glutamine amidotransferase type-1 spans 8–198 (KIIVLDYGSQ…ALNICGAKGN (191 aa)). Cysteine 85 (nucleophile) is an active-site residue. Catalysis depends on residues histidine 172 and glutamate 174. The region spanning 199–388 (WSMENFIDMQ…LGMPDEIVWR (190 aa)) is the GMPS ATP-PPase domain. 226–232 (SGGVDSS) lines the ATP pocket.

Homodimer.

The enzyme catalyses XMP + L-glutamine + ATP + H2O = GMP + L-glutamate + AMP + diphosphate + 2 H(+). It functions in the pathway purine metabolism; GMP biosynthesis; GMP from XMP (L-Gln route): step 1/1. Its function is as follows. Catalyzes the synthesis of GMP from XMP. This Lactococcus lactis subsp. lactis (strain IL1403) (Streptococcus lactis) protein is GMP synthase [glutamine-hydrolyzing] (guaA).